We begin with the raw amino-acid sequence, 88 residues long: Apolipoprotein C-I (88 aa).

Positions 1–26 (MRLFLSLPVLVVVLAMVLEGPAPTQA) are cleaved as a signal peptide.

The protein belongs to the apolipoprotein C1 family.

The protein resides in the secreted. Inhibitor of lipoprotein binding to the low density lipoprotein (LDL) receptor, LDL receptor-related protein, and very low density lipoprotein (VLDL) receptor. Associates with high density lipoproteins (HDL) and the triacylglycerol-rich lipoproteins in the plasma and makes up about 10% of the protein of the VLDL and 2% of that of HDL. Appears to interfere directly with fatty acid uptake and is also the major plasma inhibitor of cholesteryl ester transfer protein (CETP). Binds free fatty acids and reduces their intracellular esterification. Modulates the interaction of APOE with beta-migrating VLDL and inhibits binding of beta-VLDL to the LDL receptor-related protein. In Phoca vitulina (Harbor seal), this protein is Apolipoprotein C-I (APOC1).